The chain runs to 308 residues: Ribonuclease Z (308 aa).

Zn(2+) is bound by residues histidine 61, histidine 63, aspartate 65, histidine 66, histidine 139, aspartate 210, and histidine 268. Aspartate 65 functions as the Proton acceptor in the catalytic mechanism.

The protein belongs to the RNase Z family. Homodimer. Zn(2+) is required as a cofactor.

The catalysed reaction is Endonucleolytic cleavage of RNA, removing extra 3' nucleotides from tRNA precursor, generating 3' termini of tRNAs. A 3'-hydroxy group is left at the tRNA terminus and a 5'-phosphoryl group is left at the trailer molecule.. Functionally, zinc phosphodiesterase, which displays some tRNA 3'-processing endonuclease activity. Probably involved in tRNA maturation, by removing a 3'-trailer from precursor tRNA. The sequence is that of Ribonuclease Z from Halobacterium salinarum (strain ATCC 700922 / JCM 11081 / NRC-1) (Halobacterium halobium).